Here is a 481-residue protein sequence, read N- to C-terminus: Aspartyl/glutamyl-tRNA(Asn/Gln) amidotransferase subunit B (481 aa).

This sequence belongs to the GatB/GatE family. GatB subfamily. In terms of assembly, heterotrimer of A, B and C subunits.

It carries out the reaction L-glutamyl-tRNA(Gln) + L-glutamine + ATP + H2O = L-glutaminyl-tRNA(Gln) + L-glutamate + ADP + phosphate + H(+). The catalysed reaction is L-aspartyl-tRNA(Asn) + L-glutamine + ATP + H2O = L-asparaginyl-tRNA(Asn) + L-glutamate + ADP + phosphate + 2 H(+). Allows the formation of correctly charged Asn-tRNA(Asn) or Gln-tRNA(Gln) through the transamidation of misacylated Asp-tRNA(Asn) or Glu-tRNA(Gln) in organisms which lack either or both of asparaginyl-tRNA or glutaminyl-tRNA synthetases. The reaction takes place in the presence of glutamine and ATP through an activated phospho-Asp-tRNA(Asn) or phospho-Glu-tRNA(Gln). The protein is Aspartyl/glutamyl-tRNA(Asn/Gln) amidotransferase subunit B of Pseudomonas syringae pv. syringae (strain B728a).